Reading from the N-terminus, the 359-residue chain is tRNA-specific 2-thiouridylase MnmA (359 aa).

Residues 9–16 (GMSGGVDS) and Met35 each bind ATP. Cys105 functions as the Nucleophile in the catalytic mechanism. The cysteines at positions 105 and 203 are disulfide-linked. Residue Gly129 participates in ATP binding. Residues 153-155 (KDQ) are interaction with tRNA. The active-site Cysteine persulfide intermediate is the Cys203. Residues 309-310 (RY) are interaction with tRNA.

The protein belongs to the MnmA/TRMU family.

The protein localises to the cytoplasm. The enzyme catalyses S-sulfanyl-L-cysteinyl-[protein] + uridine(34) in tRNA + AH2 + ATP = 2-thiouridine(34) in tRNA + L-cysteinyl-[protein] + A + AMP + diphosphate + H(+). Catalyzes the 2-thiolation of uridine at the wobble position (U34) of tRNA, leading to the formation of s(2)U34. This Acetivibrio thermocellus (strain ATCC 27405 / DSM 1237 / JCM 9322 / NBRC 103400 / NCIMB 10682 / NRRL B-4536 / VPI 7372) (Clostridium thermocellum) protein is tRNA-specific 2-thiouridylase MnmA.